We begin with the raw amino-acid sequence, 223 residues long: Putative NAD(P)H nitroreductase SAUSA300_2462 (223 aa).

The protein belongs to the nitroreductase family. Requires FMN as cofactor.

In Staphylococcus aureus (strain USA300), this protein is Putative NAD(P)H nitroreductase SAUSA300_2462.